The primary structure comprises 289 residues: ATP synthase gamma chain (289 aa).

This sequence belongs to the ATPase gamma chain family. F-type ATPases have 2 components, CF(1) - the catalytic core - and CF(0) - the membrane proton channel. CF(1) has five subunits: alpha(3), beta(3), gamma(1), delta(1), epsilon(1). CF(0) has three main subunits: a, b and c.

It localises to the cell inner membrane. Produces ATP from ADP in the presence of a proton gradient across the membrane. The gamma chain is believed to be important in regulating ATPase activity and the flow of protons through the CF(0) complex. In Acinetobacter baylyi (strain ATCC 33305 / BD413 / ADP1), this protein is ATP synthase gamma chain.